Reading from the N-terminus, the 594-residue chain is UvrABC system protein C (594 aa).

The GIY-YIG domain maps to 14-91 (DQPGCYLMKD…IKKHDPKYNI (78 aa)). The UVR domain maps to 196 to 231 (KEVRSELETKMYEASEKLEFERAKELRDQIAHIDAI).

This sequence belongs to the UvrC family. As to quaternary structure, interacts with UvrB in an incision complex.

It localises to the cytoplasm. Functionally, the UvrABC repair system catalyzes the recognition and processing of DNA lesions. UvrC both incises the 5' and 3' sides of the lesion. The N-terminal half is responsible for the 3' incision and the C-terminal half is responsible for the 5' incision. This is UvrABC system protein C from Bacillus anthracis (strain A0248).